The chain runs to 404 residues: Probable thioredoxin reductase ARB_06224 (404 aa).

A signal peptide spans 1–22 (MGVQRLALALIAFTSALTSVIA). 67–75 (DEGIYRNGA) contacts FAD. An intrachain disulfide couples Cys172 to Cys175. A glycan (N-linked (GlcNAc...) asparagine) is linked at Asn213. 334–343 (DANNDGSTNG) contributes to the FAD binding site.

The protein belongs to the class-II pyridine nucleotide-disulfide oxidoreductase family. In terms of assembly, homodimer. It depends on FAD as a cofactor.

Its subcellular location is the secreted. The catalysed reaction is [thioredoxin]-dithiol + NADP(+) = [thioredoxin]-disulfide + NADPH + H(+). This chain is Probable thioredoxin reductase ARB_06224, found in Arthroderma benhamiae (strain ATCC MYA-4681 / CBS 112371) (Trichophyton mentagrophytes).